A 68-amino-acid polypeptide reads, in one-letter code: Large ribosomal subunit protein bL31 (68 aa).

Residues Cys16, Cys18, Cys36, and Cys39 each coordinate Zn(2+).

This sequence belongs to the bacterial ribosomal protein bL31 family. Type A subfamily. In terms of assembly, part of the 50S ribosomal subunit. Zn(2+) serves as cofactor.

Functionally, binds the 23S rRNA. This Dictyoglomus thermophilum (strain ATCC 35947 / DSM 3960 / H-6-12) protein is Large ribosomal subunit protein bL31.